We begin with the raw amino-acid sequence, 499 residues long: Cysteine--tRNA ligase (499 aa).

Cys-30 is a binding site for Zn(2+). The 'HIGH' region motif lies at 32-42; the sequence is PTVYDRAHLGN. Zn(2+)-binding residues include Cys-221, His-246, and Glu-250. The short motif at 279 to 283 is the 'KMSKS' region element; the sequence is KMSKS. Lys-282 serves as a coordination point for ATP.

It belongs to the class-I aminoacyl-tRNA synthetase family. In terms of assembly, monomer. The cofactor is Zn(2+).

It localises to the cytoplasm. The enzyme catalyses tRNA(Cys) + L-cysteine + ATP = L-cysteinyl-tRNA(Cys) + AMP + diphosphate. In Cereibacter sphaeroides (strain ATCC 17023 / DSM 158 / JCM 6121 / CCUG 31486 / LMG 2827 / NBRC 12203 / NCIMB 8253 / ATH 2.4.1.) (Rhodobacter sphaeroides), this protein is Cysteine--tRNA ligase.